The chain runs to 269 residues: Gap junction gamma-3 protein (269 aa).

Residues 1–33 (MLLLELPIKCRMCGRFLRQLLAQESQHSTPVGR) lie on the Extracellular side of the membrane. Residues 34–54 (FLLPMLMGFRLLILVSSGPGV) traverse the membrane as a helical segment. The Cytoplasmic portion of the chain corresponds to 55–86 (FGNDENEFICHLGQPGCKTICYDVFRPLSPLR). A helical membrane pass occupies residues 87–107 (FWAFQVILMAVPSAIYVAFTL). Topologically, residues 108-145 (YHVIGYWEVPGKENKEQETQISKGDHSKDVSGAKSLKL) are extracellular. Residues 146 to 166 (LWAYVAHLGVRLALEGAALGV) form a helical membrane-spanning segment. Over 167-205 (QYNLYGFKMSSTFICREDPCIGSTTCFQSHPSEKTIFLN) the chain is Cytoplasmic. The helical transmembrane segment at 206–226 (IMFGISGACFLFIFLELALLG) threads the bilayer. Over 227 to 269 (LGRFWRIYKHKLSFLKKLPTSESSVRSKDTTDELSVVEAKEPF) the chain is Extracellular. S261 bears the Phosphoserine mark.

It belongs to the connexin family. Gamma-type subfamily. As to quaternary structure, a connexon is composed of a hexamer of connexins. As to expression, CNS specific. Expression is restricted to brain, spinal cord, and sciatic nerve.

The protein resides in the cell membrane. It is found in the cell junction. The protein localises to the gap junction. In terms of biological role, one gap junction consists of a cluster of closely packed pairs of transmembrane channels, the connexons, through which materials of low MW diffuse from one cell to a neighboring cell. The protein is Gap junction gamma-3 protein (Gjc3) of Mus musculus (Mouse).